Here is a 397-residue protein sequence, read N- to C-terminus: Dual specificity mitogen-activated protein kinase kinase 2 (397 aa).

A disordered region spans residues 1-21 (MAPKRRPVPLIIAPTGEGQST). One can recognise a Protein kinase domain in the interval 69–366 (FDPICELGAG…LKMLMGHTFI (298 aa)). ATP-binding positions include 75-83 (LGAGNGGVV) and Lys-98. Catalysis depends on Asp-191, which acts as the Proton acceptor. A phosphoserine; by RAF mark is found at Ser-219 and Ser-223. The disordered stretch occupies residues 284–306 (GGAEGHSMSPRQRPPGRPVSGHG).

Belongs to the protein kinase superfamily. STE Ser/Thr protein kinase family. MAP kinase kinase subfamily. In terms of processing, phosphorylation on Ser/Thr by MAP kinase kinase kinases (RAF) positively regulates the kinase activity.

The enzyme catalyses L-seryl-[protein] + ATP = O-phospho-L-seryl-[protein] + ADP + H(+). It catalyses the reaction L-threonyl-[protein] + ATP = O-phospho-L-threonyl-[protein] + ADP + H(+). It carries out the reaction L-tyrosyl-[protein] + ATP = O-phospho-L-tyrosyl-[protein] + ADP + H(+). Its function is as follows. Catalyzes the concomitant phosphorylation of a threonine and a tyrosine residue in a Thr-Glu-Tyr sequence located in MAP kinases. The protein is Dual specificity mitogen-activated protein kinase kinase 2 (map2k2) of Cyprinus carpio (Common carp).